A 367-amino-acid polypeptide reads, in one-letter code: Metacaspase-1 (367 aa).

The interval 47 to 77 is disordered; sequence DPRTAPPPQPSSAPSPPPQIHAPPGQLPHPH. The segment covering 50–73 has biased composition (pro residues); the sequence is TAPPPQPSSAPSPPPQIHAPPGQL. Active-site residues include histidine 164 and cysteine 220.

It belongs to the peptidase C14B family. In terms of assembly, interacts (via N-terminus) with LSD1. In terms of processing, proteolytically processed; by an autocatalytic mechanism.

Functionally, cysteine protease that cleaves specifically after arginine or lysine residues. Does not cleave caspase-specific substrates. Acts as a positive regulator of cell death. Required for both oxidative stress cell death response and hypersensitive cell death response mediated by immune response. This Arabidopsis thaliana (Mouse-ear cress) protein is Metacaspase-1 (AMC1).